The following is a 317-amino-acid chain: Acetyl-coenzyme A carboxylase carboxyl transferase subunit alpha (317 aa).

The region spanning 40 to 293 (LEGRVRDAMV…ETVIGDALKE (254 aa)) is the CoA carboxyltransferase C-terminal domain.

Belongs to the AccA family. As to quaternary structure, acetyl-CoA carboxylase is a heterohexamer composed of biotin carboxyl carrier protein (AccB), biotin carboxylase (AccC) and two subunits each of ACCase subunit alpha (AccA) and ACCase subunit beta (AccD).

Its subcellular location is the cytoplasm. The catalysed reaction is N(6)-carboxybiotinyl-L-lysyl-[protein] + acetyl-CoA = N(6)-biotinyl-L-lysyl-[protein] + malonyl-CoA. It functions in the pathway lipid metabolism; malonyl-CoA biosynthesis; malonyl-CoA from acetyl-CoA: step 1/1. Functionally, component of the acetyl coenzyme A carboxylase (ACC) complex. First, biotin carboxylase catalyzes the carboxylation of biotin on its carrier protein (BCCP) and then the CO(2) group is transferred by the carboxyltransferase to acetyl-CoA to form malonyl-CoA. In Rhizobium meliloti (strain 1021) (Ensifer meliloti), this protein is Acetyl-coenzyme A carboxylase carboxyl transferase subunit alpha.